The sequence spans 400 residues: Exodeoxyribonuclease 7 large subunit (400 aa).

This sequence belongs to the XseA family. In terms of assembly, heterooligomer composed of large and small subunits.

It is found in the cytoplasm. The enzyme catalyses Exonucleolytic cleavage in either 5'- to 3'- or 3'- to 5'-direction to yield nucleoside 5'-phosphates.. In terms of biological role, bidirectionally degrades single-stranded DNA into large acid-insoluble oligonucleotides, which are then degraded further into small acid-soluble oligonucleotides. The protein is Exodeoxyribonuclease 7 large subunit of Clostridium novyi (strain NT).